A 185-amino-acid chain; its full sequence is Elongation factor P (185 aa).

The protein belongs to the elongation factor P family.

Its subcellular location is the cytoplasm. The protein operates within protein biosynthesis; polypeptide chain elongation. Its function is as follows. Involved in peptide bond synthesis. Stimulates efficient translation and peptide-bond synthesis on native or reconstituted 70S ribosomes in vitro. Probably functions indirectly by altering the affinity of the ribosome for aminoacyl-tRNA, thus increasing their reactivity as acceptors for peptidyl transferase. This is Elongation factor P from Thermoanaerobacter sp. (strain X514).